Consider the following 357-residue polypeptide: 4-hydroxy-2-oxovalerate aldolase (357 aa).

Residues Met-1–Thr-21 are disordered. Residues Val-15 to Leu-265 form the Pyruvate carboxyltransferase domain. Arg-23 to Asp-24 is a substrate binding site. Mn(2+) is bound at residue Asp-24. The Proton acceptor role is filled by His-27. Substrate-binding residues include Ser-177 and His-204. Mn(2+) contacts are provided by His-204 and His-206.

The protein belongs to the 4-hydroxy-2-oxovalerate aldolase family.

The enzyme catalyses (S)-4-hydroxy-2-oxopentanoate = acetaldehyde + pyruvate. Involved in the biosynthesis of the peptidyl nucleoside antibiotic nikkomycin. This is 4-hydroxy-2-oxovalerate aldolase from Streptomyces tendae.